Reading from the N-terminus, the 263-residue chain is Endonuclease 8 (263 aa).

The active-site Schiff-base intermediate with DNA is Pro2. The active-site Proton donor is the Glu3. Catalysis depends on Lys53, which acts as the Proton donor; for beta-elimination activity. DNA is bound by residues Gln70, Arg125, and Asn169. Residues 229 to 263 (KVFHRDGEPCERCGGIIEKTTLSSRPFYWCPGCQH) form an FPG-type zinc finger. The active-site Proton donor; for delta-elimination activity is the Arg253.

The protein belongs to the FPG family. It depends on Zn(2+) as a cofactor.

It carries out the reaction 2'-deoxyribonucleotide-(2'-deoxyribose 5'-phosphate)-2'-deoxyribonucleotide-DNA = a 3'-end 2'-deoxyribonucleotide-(2,3-dehydro-2,3-deoxyribose 5'-phosphate)-DNA + a 5'-end 5'-phospho-2'-deoxyribonucleoside-DNA + H(+). In terms of biological role, involved in base excision repair of DNA damaged by oxidation or by mutagenic agents. Acts as a DNA glycosylase that recognizes and removes damaged bases. Has a preference for oxidized pyrimidines, such as thymine glycol, 5,6-dihydrouracil and 5,6-dihydrothymine. Has AP (apurinic/apyrimidinic) lyase activity and introduces nicks in the DNA strand. Cleaves the DNA backbone by beta-delta elimination to generate a single-strand break at the site of the removed base with both 3'- and 5'-phosphates. The polypeptide is Endonuclease 8 (Escherichia coli O6:K15:H31 (strain 536 / UPEC)).